The following is an 89-amino-acid chain: Small ribosomal subunit protein uS15 (89 aa).

This sequence belongs to the universal ribosomal protein uS15 family. In terms of assembly, part of the 30S ribosomal subunit. Forms a bridge to the 50S subunit in the 70S ribosome, contacting the 23S rRNA.

Its function is as follows. One of the primary rRNA binding proteins, it binds directly to 16S rRNA where it helps nucleate assembly of the platform of the 30S subunit by binding and bridging several RNA helices of the 16S rRNA. Functionally, forms an intersubunit bridge (bridge B4) with the 23S rRNA of the 50S subunit in the ribosome. The protein is Small ribosomal subunit protein uS15 of Parafrankia sp. (strain EAN1pec).